The sequence spans 693 residues: Elongation factor G (693 aa).

Positions 9 to 283 (ERVRNIGIIA…AVCDYLPSPV (275 aa)) constitute a tr-type G domain. Residues 18-25 (AHIDAGKT), 82-86 (DTPGH), and 136-139 (NKMD) each bind GTP.

Belongs to the TRAFAC class translation factor GTPase superfamily. Classic translation factor GTPase family. EF-G/EF-2 subfamily.

The protein resides in the cytoplasm. Catalyzes the GTP-dependent ribosomal translocation step during translation elongation. During this step, the ribosome changes from the pre-translocational (PRE) to the post-translocational (POST) state as the newly formed A-site-bound peptidyl-tRNA and P-site-bound deacylated tRNA move to the P and E sites, respectively. Catalyzes the coordinated movement of the two tRNA molecules, the mRNA and conformational changes in the ribosome. This Dehalococcoides mccartyi (strain ATCC BAA-2266 / KCTC 15142 / 195) (Dehalococcoides ethenogenes (strain 195)) protein is Elongation factor G.